A 593-amino-acid polypeptide reads, in one-letter code: Meiotic recombination protein REC8 homolog (593 aa).

Serine 149 bears the Phosphoserine mark. Residue threonine 164 is modified to Phosphothreonine. Serine 192 is subject to Phosphoserine. 3 disordered regions span residues 247-282, 317-344, and 422-444; these read QRRA…AQVE, ELRL…RRGR, and PQLE…RRKT. Residues 255–265 are compositionally biased toward basic and acidic residues; the sequence is DESKEEPRALE. Residues 432–444 show a composition bias toward basic and acidic residues; it reads EERVADKEERRKT.

Belongs to the rad21 family. As to quaternary structure, interacts (phosphorylated and unphosphorylated form) with SMC3. Interacts with SYCP3. Interacts (phosphorylated and unphosphorylated form) with SMC1B. Does not interact with SMC1A. Interacts with RAD51. Forms a complex with EWSR1, PRDM9, SYCP3 and SYCP1; complex formation is dependent of phosphorylated form of REC8 and requires PRDM9 bound to hotspot DNA; EWSR1 joins PRDM9 with the chromosomal axis through REC8. Post-translationally, phosphorylated.

Its subcellular location is the nucleus. It is found in the chromosome. It localises to the centromere. Its function is as follows. Required during meiosis for separation of sister chromatids and homologous chromosomes. Proteolytic cleavage of REC8 on chromosome arms by separin during anaphase I allows for homologous chromosome separation in meiosis I and cleavage of REC8 on centromeres during anaphase II allows for sister chromatid separation in meiosis II. This chain is Meiotic recombination protein REC8 homolog, found in Rattus norvegicus (Rat).